Reading from the N-terminus, the 1164-residue chain is MDKYNNYSNVIKNKSSISPLLAAAAKIEPEITVLSSASKSNRSQYSQSLADTLLGLGYRSIFDIAKVSRQRFIKRHDESLLGNGAVIFDKAVSMANQVLQKYRKNRLEKSNSPLVPQTSSSTDASSESQTNKLPEYNQLFPEPWDNFCRPGAIEALDSPASYLLDLYKFIQSVELDGSNQARKLETRRADIPKLSLDNDALYKEVTALSIVNDVLSGSAREYIDQSGQADKAVNQILGDTHFPFTLPYSLPTQQINKGLGASNIELGTVIQRVDPQFSWNTTQEKYNQVLLAYTQLSSEQIALLSLPDVFTQNFLTQTELSAGYLSASTTEILAEKDLSRHGYIVKAADNIKGPTQLVEHSDASYDVIELTCTNQAKETITVKLRGENIITYQRTKARMVPFDNSSPFSRQLKLTFVAEDNPSLGNLDKGPYFANMDIYAAEWVRENVSSETMVSRPFLTMTYRIAIAKAGASLEELQPEADAFFINNFGLSAEDSSQLVKLVAFGDQTGSKAEEIESLLSCGENLPIVSPNVIFANPIFGSYFNDEPFPAPYHFGGVYINAHQRNAMTIIRAEGGREIQSLSNFRLERLNRFIRLQRWLDLPSHQLDLLLTSVMQADADNSQQEITEPVLKSLGLFRHLNLQYKITPEIFSSWLYQLTPFAVSGEIAFFDRIFNREQLFDQPFILDGGSFTYLDAKGSDAKSVKQLCAGLNISAVTFQFIAPLVQSALGLEAGTLVRSFEVVSSLYRLVSIPQTFGLSTEDGLILMNILTDEMGYLAKQPAFDDKQTQDKDFLSIILKMEALSAWLTKNNLTPASLALLLGVTRLAVVPTNNMVTFFKGIANGLSENVCLTTDDFQRQELEGADWWTLLSTNQVIDDMGLVLDIHPVWGKSDEEMLMEKIQSIGVSNDNNTLSIIVQILIQAKNAQENLLSQTISAEYGVERSVVPLQLRWLGSNVYSVLNQVLNNTPTDISSIVPKLSELTYSLLIYTQLINSLKLNKEFIFLRLTQPNWLGLTQPKLSTQLSLPEIYLITCYQDWVVNANKNEDSIHEYLEFANIKKTEAEKTLVDNSEKCAELLAEILAWDAGEILKAASLLGLNPPQATNVFEIDWIRRLQTLSEKTMISTEYLWQMGDLTENSEFSLKEGVGEAVMAALKAQGDSDNV.

A disordered region spans residues 106-131; sequence RLEKSNSPLVPQTSSSTDASSESQTN. Residues 118-130 show a composition bias toward low complexity; that stretch reads TSSSTDASSESQT.

Semipurified toxin complex consists of at least YenA1, YenA2, YenB, YenC1, YenC2, Chi1 and Chi2. The Yen-TC:K9 subcomplex is about 26 nm tall and 22 nm in diameter with 5-fold symmetry and 5 copies of YenA1, YenA2, Chi1 and Chi2; the chitinase subunits may be solvent accessible on the exterior the complex. The Yen-TC:K9 subcomplex has no insecticidal activity. The native complex with additional YenB, YenC1 and YenC2 subunits is 16 nm taller and is insecticidal; the toxicity-conferring subunits are present at about 1 copy each.

The protein resides in the secreted. Toxin complex is secreted when grown at 25 degrees Celsius or less; at higher temperatures the proteins are present intracellularly but not secreted. Part of an orally active toxin complex (TC) with strong insecticidal effects on larvae of the Coleoptera Costelytra zealandica, Acrossidius tasmania and Adoryphorus couloni and some Lepidoptera larvae. The TC has an endochitinase activity. This Yersinia entomophaga protein is Toxin subunit YenA1.